The following is a 158-amino-acid chain: Transcription elongation factor GreA (158 aa).

A coiled-coil region spans residues 4–75 (QKQYPMTQEG…QRVENMLRNA (72 aa)).

The protein belongs to the GreA/GreB family.

In terms of biological role, necessary for efficient RNA polymerase transcription elongation past template-encoded arresting sites. The arresting sites in DNA have the property of trapping a certain fraction of elongating RNA polymerases that pass through, resulting in locked ternary complexes. Cleavage of the nascent transcript by cleavage factors such as GreA or GreB allows the resumption of elongation from the new 3'terminus. GreA releases sequences of 2 to 3 nucleotides. The polypeptide is Transcription elongation factor GreA (Staphylococcus saprophyticus subsp. saprophyticus (strain ATCC 15305 / DSM 20229 / NCIMB 8711 / NCTC 7292 / S-41)).